We begin with the raw amino-acid sequence, 374 residues long: Chaperone protein DnaJ (374 aa).

The region spanning 5-70 is the J domain; it reads DFYEILGLGK…QKRDAYDRYG (66 aa). Residues 28–47 are disordered; the sequence is LAMKHHPDRNPDSKGAEDKF. Positions 35–47 are enriched in basic and acidic residues; it reads DRNPDSKGAEDKF. The CR-type zinc-finger motif lies at 134–212; the sequence is GYDTTIRVPS…CSGAGKIKRN (79 aa). Zn(2+)-binding residues include C147, C150, C164, C167, C186, C189, C200, and C203. 4 CXXCXGXG motif repeats span residues 147–154, 164–171, 186–193, and 200–207; these read CETCDGSG, CTTCGGHG, CPKCHGSG, and CTACSGAG.

The protein belongs to the DnaJ family. In terms of assembly, homodimer. Requires Zn(2+) as cofactor.

It is found in the cytoplasm. Its function is as follows. Participates actively in the response to hyperosmotic and heat shock by preventing the aggregation of stress-denatured proteins and by disaggregating proteins, also in an autonomous, DnaK-independent fashion. Unfolded proteins bind initially to DnaJ; upon interaction with the DnaJ-bound protein, DnaK hydrolyzes its bound ATP, resulting in the formation of a stable complex. GrpE releases ADP from DnaK; ATP binding to DnaK triggers the release of the substrate protein, thus completing the reaction cycle. Several rounds of ATP-dependent interactions between DnaJ, DnaK and GrpE are required for fully efficient folding. Also involved, together with DnaK and GrpE, in the DNA replication of plasmids through activation of initiation proteins. This Herminiimonas arsenicoxydans protein is Chaperone protein DnaJ.